A 167-amino-acid chain; its full sequence is Photosystem I assembly protein Ycf3 (167 aa).

TPR repeat units lie at residues 35–68 (AFTYYRDGMSAQAEGEYAEALQNYYEAMRLEIDP), 72–105 (SYILYNIGLIHTSNGEHAKALEYYFQALERNPSL), and 120–153 (GEQAIQQQDIESSKAWFNQAAEYWKQAIQLAPGN).

It belongs to the Ycf3 family.

Its subcellular location is the plastid. It is found in the chloroplast thylakoid membrane. Its function is as follows. Essential for the assembly of the photosystem I (PSI) complex. May act as a chaperone-like factor to guide the assembly of the PSI subunits. This chain is Photosystem I assembly protein Ycf3, found in Chara vulgaris (Common stonewort).